A 258-amino-acid chain; its full sequence is uncharacterized protein (258 aa).

The chain crosses the membrane as a helical span at residues glycine 163–glycine 187.

It localises to the membrane. This is an uncharacterized protein from Methanocaldococcus jannaschii (strain ATCC 43067 / DSM 2661 / JAL-1 / JCM 10045 / NBRC 100440) (Methanococcus jannaschii).